Reading from the N-terminus, the 236-residue chain is Carbonyl reductase family member 4 (236 aa).

NADP(+) contacts are provided by residues 11–14 (SRGI), 34–35 (RD), aspartate 55, and 82–84 (SAG). A substrate-binding site is contributed by serine 134. NADP(+) is bound by residues tyrosine 147, lysine 151, and 180-182 (IHT). The active-site Proton acceptor is tyrosine 147.

This sequence belongs to the short-chain dehydrogenases/reductases (SDR) family. In terms of assembly, homotetramer (in vitro). Heterotetramer with HSD17B8; contains two molecules each of HSD17B8 and CBR4.

The protein resides in the mitochondrion matrix. Its pathway is lipid metabolism; fatty acid biosynthesis. In terms of biological role, the heterotetramer with HSD17B8 has NADH-dependent 3-ketoacyl-acyl carrier protein reductase activity, and thereby plays a role in mitochondrial fatty acid biosynthesis. Within the heterotetramer, HSD17B8 binds NADH; CBR4 binds NADPD. The homotetramer has NADPH-dependent quinone reductase activity. Both homotetramer and the heterotetramer have broad in vitro substrate specificity and can reduce 9,10-phenanthrenequinone, 1,4-benzoquinone and various other o-quinones and p-quinones. The protein is Carbonyl reductase family member 4 (cbr4) of Xenopus tropicalis (Western clawed frog).